We begin with the raw amino-acid sequence, 406 residues long: Acetylornithine/succinyldiaminopimelate aminotransferase (406 aa).

Pyridoxal 5'-phosphate is bound by residues 108–109 and Phe141; that span reads GT. Position 144 (Arg144) interacts with N(2)-acetyl-L-ornithine. 226 to 229 is a binding site for pyridoxal 5'-phosphate; it reads DEVQ. Position 255 is an N6-(pyridoxal phosphate)lysine (Lys255). Ser283 lines the N(2)-acetyl-L-ornithine pocket. A pyridoxal 5'-phosphate-binding site is contributed by Thr284.

The protein belongs to the class-III pyridoxal-phosphate-dependent aminotransferase family. ArgD subfamily. As to quaternary structure, homodimer. Requires pyridoxal 5'-phosphate as cofactor.

The protein localises to the cytoplasm. The enzyme catalyses N(2)-acetyl-L-ornithine + 2-oxoglutarate = N-acetyl-L-glutamate 5-semialdehyde + L-glutamate. It catalyses the reaction N-succinyl-(2S,6S)-2,6-diaminopimelate + 2-oxoglutarate = (S)-2-succinylamino-6-oxoheptanedioate + L-glutamate. Its pathway is amino-acid biosynthesis; L-arginine biosynthesis; N(2)-acetyl-L-ornithine from L-glutamate: step 4/4. It functions in the pathway amino-acid biosynthesis; L-lysine biosynthesis via DAP pathway; LL-2,6-diaminopimelate from (S)-tetrahydrodipicolinate (succinylase route): step 2/3. Its function is as follows. Involved in both the arginine and lysine biosynthetic pathways. The polypeptide is Acetylornithine/succinyldiaminopimelate aminotransferase (Escherichia coli O6:H1 (strain CFT073 / ATCC 700928 / UPEC)).